Consider the following 292-residue polypeptide: MPQHDQLHRYLFENFAVRGELVTVSETLQQILENHDYPQPVKNVLAELLVATSLLTATLKFDGDITVQLQGDGPMSLAVINGNNNQQMRGVARVQGEIPENADLKTLVGNGYVVITITPSEGERYQGVVGLEGDTLAACLEDYFMRSEQLPTRLFIRTGDVDGKPAAGGMLLQVMPAQNAQQDDFDHLATLTETIKTEELLTLPANEVLWRLYHEEEVTVYDPQDVEFKCTCSRERCADALKTLPDEEVDSILAEDGEIDMHCDYCGNHYLFNAMDIAEIRNNASPADPQVH.

2 cysteine pairs are disulfide-bonded: Cys230/Cys232 and Cys263/Cys266.

It belongs to the HSP33 family. Under oxidizing conditions two disulfide bonds are formed involving the reactive cysteines. Under reducing conditions zinc is bound to the reactive cysteines and the protein is inactive.

It is found in the cytoplasm. Its function is as follows. Redox regulated molecular chaperone. Protects both thermally unfolding and oxidatively damaged proteins from irreversible aggregation. Plays an important role in the bacterial defense system toward oxidative stress. The protein is 33 kDa chaperonin of Escherichia coli O7:K1 (strain IAI39 / ExPEC).